Reading from the N-terminus, the 329-residue chain is Acetyl-coenzyme A carboxylase carboxyl transferase subunit alpha (329 aa).

Positions glutamine 40 to glutamate 294 constitute a CoA carboxyltransferase C-terminal domain.

The protein belongs to the AccA family. Acetyl-CoA carboxylase is a heterohexamer composed of biotin carboxyl carrier protein (AccB), biotin carboxylase (AccC) and two subunits each of ACCase subunit alpha (AccA) and ACCase subunit beta (AccD).

It is found in the cytoplasm. It catalyses the reaction N(6)-carboxybiotinyl-L-lysyl-[protein] + acetyl-CoA = N(6)-biotinyl-L-lysyl-[protein] + malonyl-CoA. It functions in the pathway lipid metabolism; malonyl-CoA biosynthesis; malonyl-CoA from acetyl-CoA: step 1/1. Component of the acetyl coenzyme A carboxylase (ACC) complex. First, biotin carboxylase catalyzes the carboxylation of biotin on its carrier protein (BCCP) and then the CO(2) group is transferred by the carboxyltransferase to acetyl-CoA to form malonyl-CoA. The sequence is that of Acetyl-coenzyme A carboxylase carboxyl transferase subunit alpha from Prochlorococcus marinus (strain NATL2A).